A 251-amino-acid chain; its full sequence is CDP-diacylglycerol pyrophosphatase (251 aa).

A helical membrane pass occupies residues 4–24 (AGLLFLVMIVIAVVAAGIGYW).

The protein belongs to the Cdh family.

Its subcellular location is the cell inner membrane. The enzyme catalyses a CDP-1,2-diacyl-sn-glycerol + H2O = a 1,2-diacyl-sn-glycero-3-phosphate + CMP + 2 H(+). It functions in the pathway phospholipid metabolism; CDP-diacylglycerol degradation; phosphatidate from CDP-diacylglycerol: step 1/1. This Shigella boydii serotype 4 (strain Sb227) protein is CDP-diacylglycerol pyrophosphatase.